A 224-amino-acid polypeptide reads, in one-letter code: Orotate phosphoribosyltransferase (224 aa).

Residues K26, 73 to 74 (YK), R100, K101, K104, H106, and 127 to 135 (EDVTTAGTS) each bind 5-phospho-alpha-D-ribose 1-diphosphate. Residues T131 and R160 each coordinate orotate.

Belongs to the purine/pyrimidine phosphoribosyltransferase family. PyrE subfamily. In terms of assembly, homodimer. Requires Mg(2+) as cofactor.

It carries out the reaction orotidine 5'-phosphate + diphosphate = orotate + 5-phospho-alpha-D-ribose 1-diphosphate. It functions in the pathway pyrimidine metabolism; UMP biosynthesis via de novo pathway; UMP from orotate: step 1/2. Its function is as follows. Catalyzes the transfer of a ribosyl phosphate group from 5-phosphoribose 1-diphosphate to orotate, leading to the formation of orotidine monophosphate (OMP). This chain is Orotate phosphoribosyltransferase, found in Clostridium beijerinckii (strain ATCC 51743 / NCIMB 8052) (Clostridium acetobutylicum).